Here is a 589-residue protein sequence, read N- to C-terminus: Serine/threonine-protein kinase shk2 (589 aa).

The PH domain maps to 23–125 (GIIRSGWVML…WMDLISSRAL (103 aa)). The region spanning 129-142 (VSSPMNPKHQVHVG) is the CRIB domain. The Protein kinase domain occupies 309-566 (FNVKHKLGQG…AAELLTHSFL (258 aa)). ATP is bound by residues 315-323 (LGQGASGSV) and Lys343. The active-site Proton acceptor is Asp434.

It belongs to the protein kinase superfamily. STE Ser/Thr protein kinase family. STE20 subfamily.

It carries out the reaction L-seryl-[protein] + ATP = O-phospho-L-seryl-[protein] + ADP + H(+). It catalyses the reaction L-threonyl-[protein] + ATP = O-phospho-L-threonyl-[protein] + ADP + H(+). Functionally, forms an activated complex with GTP-bound Ras-like cdc42. Participates in Ras-dependent morphological control and mating response pathways. This is Serine/threonine-protein kinase shk2 (shk2) from Schizosaccharomyces pombe (strain 972 / ATCC 24843) (Fission yeast).